We begin with the raw amino-acid sequence, 263 residues long: MLALRLLNVVAPAYFLCISLVTFVLQLFLFLPSMREDPTATPLFSPAVLHGALFLFLSANALGNYVLVIQNSPDDLGTCQGTMSQRPQCPPPSTHFCRVCSRVTLRHDHHCFFTGNCIGSRNMRNFILFCLYTSLACLYSMVAGVAYISAVLSISFAHPLAFLTLLPTSISQFFSGAVLGSDMFVILMLYLWFAVGLACAGFCCHQLLLILRGQTRYQVRKGMAVRARPWRKNLQEVFGKRWLLGLLVPMFNVGTESSKQQDK.

At 1–9 the chain is on the cytoplasmic side; the sequence is MLALRLLNV. The chain crosses the membrane as a helical span at residues 10-30; the sequence is VAPAYFLCISLVTFVLQLFLF. Residues 31–48 are Lumenal-facing; that stretch reads LPSMREDPTATPLFSPAV. A helical transmembrane segment spans residues 49–69; sequence LHGALFLFLSANALGNYVLVI. Residues 70 to 125 lie on the Cytoplasmic side of the membrane; the sequence is QNSPDDLGTCQGTMSQRPQCPPPSTHFCRVCSRVTLRHDHHCFFTGNCIGSRNMRN. Residues 91-131 form the DHHC domain; the sequence is PPSTHFCRVCSRVTLRHDHHCFFTGNCIGSRNMRNFILFCL. Residue Cys111 is the S-palmitoyl cysteine intermediate of the active site. A run of 2 helical transmembrane segments spans residues 126–146 and 147–167; these read FILFCLYTSLACLYSMVAGVA and YISAVLSISFAHPLAFLTLLP. Topologically, residues 168 to 182 are cytoplasmic; that stretch reads TSISQFFSGAVLGSD. Residues 183 to 203 form a helical membrane-spanning segment; sequence MFVILMLYLWFAVGLACAGFC. The Lumenal portion of the chain corresponds to 204–263; sequence CHQLLLILRGQTRYQVRKGMAVRARPWRKNLQEVFGKRWLLGLLVPMFNVGTESSKQQDK.

Belongs to the DHHC palmitoyltransferase family. Interacts with CNN3.

The protein localises to the endoplasmic reticulum membrane. It localises to the golgi apparatus membrane. The catalysed reaction is L-cysteinyl-[protein] + hexadecanoyl-CoA = S-hexadecanoyl-L-cysteinyl-[protein] + CoA. Palmitoyltransferase that could catalyze the addition of palmitate onto various protein substrates and be involved in a variety of cellular processes. Catalyzes the palmitoylation of KCNMA1, regulating localization of KCNMA1 to the plasma membrane. Might also mediate palmitoylation of CNN3. This is Palmitoyltransferase ZDHHC22 from Mus musculus (Mouse).